We begin with the raw amino-acid sequence, 551 residues long: E3 ubiquitin-protein ligase TRIM8 (551 aa).

Residues Cys-15–Asn-56 form an RING-type zinc finger. 2 consecutive B box-type zinc fingers follow at residues Cys-92–His-132 and Val-140–Val-182. A coiled-coil region spans residues Asp-181–Gln-249.

The protein belongs to the TRIM/RBCC family. As to quaternary structure, homodimer. Interacts with SOCS1 (via) SH2 domain and SOCS box. Interacts with HSP90AB1; prevents nucleus translocation of phosphorylated STAT3 and HSP90AB1. Interacts with MAP3K7/TAK1. Interacts with PIAS3. Interacts with TICAM1. Interacts with TRIM15; this interaction prevents TRIM8 cytoplasmic translocation. As to expression, widely expressed. Expressed in glomerular podocytes of kidneys.

It is found in the cytoplasm. It localises to the nucleus. The protein localises to the nuclear body. The enzyme catalyses S-ubiquitinyl-[E2 ubiquitin-conjugating enzyme]-L-cysteine + [acceptor protein]-L-lysine = [E2 ubiquitin-conjugating enzyme]-L-cysteine + N(6)-ubiquitinyl-[acceptor protein]-L-lysine.. Its pathway is protein modification; protein ubiquitination. E3 ubiquitin-protein ligase that participates in multiple biological processes including cell survival, differentiation, apoptosis, and in particular, the innate immune response. Participates in the activation of interferon-gamma signaling by promoting proteasomal degradation of the repressor SOCS1. Plays a positive role in the TNFalpha and IL-1beta signaling pathways. Mechanistically, induces the 'Lys-63'-linked polyubiquitination of MAP3K7/TAK1 component leading to the activation of NF-kappa-B. Also modulates STAT3 activity through negative regulation of PIAS3, either by degradation of PIAS3 through the ubiquitin-proteasome pathway or exclusion of PIAS3 from the nucleus. Negatively regulates TLR3/4-mediated innate immune response by catalyzing 'Lys-6'- and 'Lys-33'-linked polyubiquitination of TICAM1 and thereby disrupting the TICAM1-TBK1 interaction. The chain is E3 ubiquitin-protein ligase TRIM8 (TRIM8) from Homo sapiens (Human).